A 461-amino-acid chain; its full sequence is L-seryl-tRNA(Sec) selenium transferase (461 aa).

The residue at position 294 (Lys294) is an N6-(pyridoxal phosphate)lysine.

This sequence belongs to the SelA family. Pyridoxal 5'-phosphate serves as cofactor.

Its subcellular location is the cytoplasm. It carries out the reaction L-seryl-tRNA(Sec) + selenophosphate + H(+) = L-selenocysteinyl-tRNA(Sec) + phosphate. It participates in aminoacyl-tRNA biosynthesis; selenocysteinyl-tRNA(Sec) biosynthesis; selenocysteinyl-tRNA(Sec) from L-seryl-tRNA(Sec) (bacterial route): step 1/1. Functionally, converts seryl-tRNA(Sec) to selenocysteinyl-tRNA(Sec) required for selenoprotein biosynthesis. In Actinobacillus pleuropneumoniae serotype 5b (strain L20), this protein is L-seryl-tRNA(Sec) selenium transferase.